Consider the following 386-residue polypeptide: RNA polymerase sigma factor SigA (386 aa).

A sigma-70 factor domain-2 region spans residues 154–224 (LAEANLRLVV…TRAIADQART (71 aa)). An Interaction with polymerase core subunit RpoC motif is present at residues 178 to 181 (DLIQ). Positions 233-309 (ETINKLIRVQ…DDVIESPVDY (77 aa)) are sigma-70 factor domain-3. The segment at 322–375 (VMDTLTDREENVLRMRFGLDDGRMHTLEDVGKQFKVTRERIRQIEAKAIKKLRH) is sigma-70 factor domain-4. Positions 348 to 367 (LEDVGKQFKVTRERIRQIEA) form a DNA-binding region, H-T-H motif.

The protein belongs to the sigma-70 factor family. RpoD/SigA subfamily. As to quaternary structure, interacts transiently with the RNA polymerase catalytic core.

The protein resides in the cytoplasm. Functionally, sigma factors are initiation factors that promote the attachment of RNA polymerase to specific initiation sites and are then released. This sigma factor is the primary sigma factor during exponential growth. The polypeptide is RNA polymerase sigma factor SigA (Lactococcus lactis subsp. lactis (strain IL1403) (Streptococcus lactis)).